We begin with the raw amino-acid sequence, 699 residues long: Putative inactive kinesin-like protein KIN-7B (699 aa).

A Kinesin motor domain is found at 1 to 170 (MRAIQKKSLC…LLFGSCAKEV (170 aa)). Positions 179–247 (VMSDKALVKH…QSRLQDLLQS (69 aa)) form a coiled coil. A disordered region spans residues 249–345 (GDHDLNRQVQ…VNSRHSRPSG (97 aa)). Low complexity predominate over residues 264–275 (RSPPSVGMPPSV). The span at 276-298 (SRDDSSQVSHDDSDLYKEVRCIE) shows a compositional bias: basic and acidic residues. The span at 313–338 (GESSSPQDSNMNSGLHGNDSNASVNS) shows a compositional bias: polar residues.

Belongs to the TRAFAC class myosin-kinesin ATPase superfamily. Kinesin family. KIN-7 subfamily.

In Oryza sativa subsp. japonica (Rice), this protein is Putative inactive kinesin-like protein KIN-7B.